We begin with the raw amino-acid sequence, 492 residues long: Catalase isozyme 1 (492 aa).

Residues H65 and N138 contribute to the active site. Residue Y348 participates in heme binding.

It belongs to the catalase family. As to quaternary structure, homotetramer. Heme serves as cofactor.

The protein localises to the peroxisome. The enzyme catalyses 2 H2O2 = O2 + 2 H2O. Its function is as follows. Occurs in almost all aerobically respiring organisms and serves to protect cells from the toxic effects of hydrogen peroxide. The polypeptide is Catalase isozyme 1 (CAT1) (Solanum lycopersicum (Tomato)).